Reading from the N-terminus, the 508-residue chain is Protein FAM217A (508 aa).

It belongs to the FAM217 family.

In Homo sapiens (Human), this protein is Protein FAM217A (FAM217A).